Consider the following 413-residue polypeptide: Tyrosine--tRNA ligase (413 aa).

Tyr-34 provides a ligand contact to L-tyrosine. The 'HIGH' region signature appears at 39–48; that stretch reads CTAQSLHVGN. L-tyrosine-binding residues include Tyr-171 and Gln-175. Residues 231–235 carry the 'KMSKS' region motif; it reads KMGKT. Lys-234 provides a ligand contact to ATP. Residues 346–411 form the S4 RNA-binding domain; the sequence is IPITELLVTI…GKKCHILVKI (66 aa).

The protein belongs to the class-I aminoacyl-tRNA synthetase family. TyrS type 1 subfamily. As to quaternary structure, homodimer.

It localises to the cytoplasm. The catalysed reaction is tRNA(Tyr) + L-tyrosine + ATP = L-tyrosyl-tRNA(Tyr) + AMP + diphosphate + H(+). Functionally, catalyzes the attachment of tyrosine to tRNA(Tyr) in a two-step reaction: tyrosine is first activated by ATP to form Tyr-AMP and then transferred to the acceptor end of tRNA(Tyr). This chain is Tyrosine--tRNA ligase, found in Orientia tsutsugamushi (strain Boryong) (Rickettsia tsutsugamushi).